The primary structure comprises 555 residues: Putative polyketide hydroxylase (555 aa).

Residues 16–45 (PVLV…LVER) and 303–313 (YRAGRVFLAGD) each bind FAD. Residues 366–395 (ATTARAAARSAEHSHPGFAPPPGTSGGPQG) form a disordered region.

It belongs to the PheA/TfdB FAD monooxygenase family. It depends on FAD as a cofactor.

In terms of biological role, involved in developmentally regulated synthesis of a compound biosynthetically related to polyketide antibiotics which is essential for spore color in Streptomyces halstedii. In Streptomyces halstedii, this protein is Putative polyketide hydroxylase (schC).